The sequence spans 389 residues: Chalcone synthase 6 (389 aa).

Cys-164 is an active-site residue.

It belongs to the thiolase-like superfamily. Chalcone/stilbene synthases family.

The enzyme catalyses (E)-4-coumaroyl-CoA + 3 malonyl-CoA + 3 H(+) = 2',4,4',6'-tetrahydroxychalcone + 3 CO2 + 4 CoA. It functions in the pathway secondary metabolite biosynthesis; flavonoid biosynthesis. The primary product of this enzyme is 4,2',4',6'-tetrahydroxychalcone (also termed naringenin-chalcone or chalcone) which can under specific conditions spontaneously isomerize into naringenin. The protein is Chalcone synthase 6 (CHS6) of Pisum sativum (Garden pea).